The primary structure comprises 229 residues: Large ribosomal subunit protein bL19cy (229 aa).

The N-terminal 70 residues, Met1–Ala70, are a transit peptide targeting the chloroplast.

This sequence belongs to the bacterial ribosomal protein bL19 family. As to quaternary structure, part of the 50S ribosomal subunit.

It is found in the plastid. The protein localises to the chloroplast. In terms of biological role, located at the 30S-50S ribosomal subunit interface and binds directly to 23S ribosomal RNA. The polypeptide is Large ribosomal subunit protein bL19cy (Arabidopsis thaliana (Mouse-ear cress)).